The primary structure comprises 543 residues: Acrosin-binding protein (543 aa).

An N-terminal signal peptide occupies residues 1–25; the sequence is MRKPAAGFLPSLLKVLLLPLAPAAA. A pro-ACR binding region spans residues 26–106; the sequence is QDSTQASTPG…ASWFESFCQF (81 aa). Residues 26–273 constitute a propeptide, removed in mature form; that stretch reads QDSTQASTPG…NPSSFAPRVR (248 aa). Residues 185 to 272 form a disordered region; the sequence is SLGGQEQAPE…SNPSSFAPRV (88 aa). The span at 192-220 shows a compositional bias: basic and acidic residues; it reads APEHKQEQGVEHRQEPTQEHKQEEGQKQE. Over residues 221-231 the composition is skewed to acidic residues; it reads EQEEEQEEEGK. Residues 232–243 show a composition bias toward basic and acidic residues; that stretch reads QEEGQGTKEGRE. The tract at residues 319–427 is pro-ACR binding; that stretch reads LPHTEALLVL…NQVGSPESGR (109 aa).

As to quaternary structure, binds proacrosin (pro-ACR). Does not bind the mature form of ACR. Phosphorylated on Tyr residues in capacitated sperm. Post-translationally, the N-terminus is blocked. In terms of processing, synthesized as a 60-kDa precursor, the 32-kDa mature form is post-translationally produced by the removal of the N-terminal half of the precursor during sperm maturation in the testis and/or epididymis. As to expression, expression restricted to testis in normal tissue. Expressed in a wide spectrum of cancers, including bladder, breast, liver, lung and colon cancers.

The protein localises to the secreted. It localises to the cytoplasmic vesicle. Its subcellular location is the secretory vesicle. The protein resides in the acrosome. Acrosomal protein that maintains proacrosin (pro-ACR) as an enzymatically inactive zymogen in the acrosome. Involved also in the acrosome formation. In Homo sapiens (Human), this protein is Acrosin-binding protein.